The sequence spans 149 residues: MSNNELLEIEPMYLQFPFELKKQMSCSLYLTNKTDNNVAFKVKTTNRNNYCVRPNYGLILPKSTCKVLVTMQAQKEVPSDMQSFEKFMIQSVLASPGVTAKEVTREMFSKESGHVVEETKLRVTYVCSTTTNITSSPRTRRGFIFQCFC.

At Met-1 the chain carries N-acetylmethionine. An N-acetylserine; in Vesicle-associated protein 3-1, N-terminally processed modification is found at Ser-2. Positions 6 to 126 (LLEIEPMYLQ…EETKLRVTYV (121 aa)) constitute an MSP domain.

The protein belongs to the VAMP-associated protein (VAP) (TC 9.B.17) family.

Functionally, may play a role in vesicle trafficking. This chain is Vesicle-associated protein 3-1 (PVA31), found in Arabidopsis thaliana (Mouse-ear cress).